Reading from the N-terminus, the 95-residue chain is ESAT-6-like protein EsxC (95 aa).

The protein belongs to the WXG100 family. ESAT-6 subfamily.

Its subcellular location is the secreted. The polypeptide is ESAT-6-like protein EsxC (Mycolicibacterium paratuberculosis (strain ATCC BAA-968 / K-10) (Mycobacterium paratuberculosis)).